We begin with the raw amino-acid sequence, 203 residues long: Inositol diphosphatase DSP3 (203 aa).

Positions asparagine 20–leucine 169 constitute a Tyrosine-protein phosphatase domain. The WPD loop important for active site topology stretch occupies residues phenylalanine 76–methionine 88. Cysteine 112 acts as the Phosphocysteine intermediate in catalysis.

The protein belongs to the protein-tyrosine phosphatase family. Atypical dual-specificity phosphatase Siw14-like subfamily. In terms of assembly, interacts with FLZ1. In terms of tissue distribution, highly expressed in roots, stems and flowers. Expressed at low levels in leaves and siliques.

The protein resides in the nucleus. The catalysed reaction is 5-diphospho-1D-myo-inositol 1,2,3,4,6-pentakisphosphate + H2O = 1D-myo-inositol hexakisphosphate + phosphate + H(+). It carries out the reaction 1,5-bis(diphospho)-1D-myo-inositol 2,3,4,6-tetrakisphosphate + H2O = 1-diphospho-1D-myo-inositol 2,3,4,5,6-pentakisphosphate + phosphate + 2 H(+). The enzyme catalyses 3,5-bis(diphospho)-1D-myo-inositol 1,2,4,6-tetrakisphosphate + H2O = 3-diphospho-1D-myo-inositol 1,2,4,5,6-pentakisphosphate + phosphate + 2 H(+). It catalyses the reaction 6-diphospho-1D-myo-inositol pentakisphosphate + H2O = 1D-myo-inositol hexakisphosphate + phosphate + H(+). Functionally, cleaves the beta-phosphate at the 5-position of soluble inositol pyrophosphates. Has highest activity on 5-diphosphoinositol 1,2,3,4,6-pentakisphosphate (5-InsP(7)), 1,5-bis-diphosphoinositol 2,3,4,6-tetrakisphosphate (1,5-InsP(8)) and 3,5-InsP(8). Possesses phosphotyrosine phosphatase activity in vitro. Dephosphorylates the phosphoinositides PI(3,5)P2. Hydrolyzes para-nitrophenyl phosphate and O-methylfluorescein phosphate in vitro. The chain is Inositol diphosphatase DSP3 from Arabidopsis thaliana (Mouse-ear cress).